Consider the following 501-residue polypeptide: ATP synthase subunit alpha (501 aa).

Position 169–176 (169–176) interacts with ATP; that stretch reads GDRQTGKT.

Belongs to the ATPase alpha/beta chains family. F-type ATPases have 2 components, CF(1) - the catalytic core - and CF(0) - the membrane proton channel. CF(1) has five subunits: alpha(3), beta(3), gamma(1), delta(1), epsilon(1). CF(0) has three main subunits: a(1), b(2) and c(9-12). The alpha and beta chains form an alternating ring which encloses part of the gamma chain. CF(1) is attached to CF(0) by a central stalk formed by the gamma and epsilon chains, while a peripheral stalk is formed by the delta and b chains.

Its subcellular location is the cell membrane. It carries out the reaction ATP + H2O + 4 H(+)(in) = ADP + phosphate + 5 H(+)(out). Its function is as follows. Produces ATP from ADP in the presence of a proton gradient across the membrane. The alpha chain is a regulatory subunit. The polypeptide is ATP synthase subunit alpha (Streptococcus mutans serotype c (strain ATCC 700610 / UA159)).